A 90-amino-acid polypeptide reads, in one-letter code: Small ribosomal subunit protein bS18 (90 aa).

A disordered region spans residues 1 to 23 (MKPMRQKNTRAQGNKSISNALAS). A compositionally biased stretch (polar residues) spans 9–21 (TRAQGNKSISNAL).

Belongs to the bacterial ribosomal protein bS18 family. As to quaternary structure, part of the 30S ribosomal subunit. Forms a tight heterodimer with protein bS6.

In terms of biological role, binds as a heterodimer with protein bS6 to the central domain of the 16S rRNA, where it helps stabilize the platform of the 30S subunit. The chain is Small ribosomal subunit protein bS18 from Chlorobium luteolum (strain DSM 273 / BCRC 81028 / 2530) (Pelodictyon luteolum).